Here is a 485-residue protein sequence, read N- to C-terminus: NADH-quinone oxidoreductase subunit N (485 aa).

14 helical membrane passes run 8 to 28 (LIAL…MLSI), 35 to 55 (FLNA…LWFV), 71 to 91 (GFAM…CTFA), 105 to 125 (FYLL…ANHL), 127 to 147 (ALFL…GYAF), 159 to 179 (YTIL…LVYA), 203 to 223 (LLAG…LVPF), 235 to 255 (PAPV…GVVM), 271 to 291 (VVLG…ALSQ), 297 to 317 (LLGY…IALQ), 326 to 346 (VGVY…VVSL), 373 to 393 (AAVM…LGFI), 408 to 430 (WWLV…RVAV), and 455 to 475 (IVVL…QPLI).

It belongs to the complex I subunit 2 family. As to quaternary structure, NDH-1 is composed of 13 different subunits. Subunits NuoA, H, J, K, L, M, N constitute the membrane sector of the complex.

The protein resides in the cell inner membrane. It catalyses the reaction a quinone + NADH + 5 H(+)(in) = a quinol + NAD(+) + 4 H(+)(out). Functionally, NDH-1 shuttles electrons from NADH, via FMN and iron-sulfur (Fe-S) centers, to quinones in the respiratory chain. The immediate electron acceptor for the enzyme in this species is believed to be ubiquinone. Couples the redox reaction to proton translocation (for every two electrons transferred, four hydrogen ions are translocated across the cytoplasmic membrane), and thus conserves the redox energy in a proton gradient. This Salmonella schwarzengrund (strain CVM19633) protein is NADH-quinone oxidoreductase subunit N.